The following is a 359-amino-acid chain: Fructose-bisphosphate aldolase (359 aa).

Ser-50 is a D-glyceraldehyde 3-phosphate binding site. Asp-83 (proton donor) is an active-site residue. 4 residues coordinate Zn(2+): His-84, Asp-105, Glu-142, and His-198. Gly-199 serves as a coordination point for dihydroxyacetone phosphate. Position 232 (His-232) interacts with Zn(2+). Residues 233 to 235 and 275 to 278 contribute to the dihydroxyacetone phosphate site; these read GSS and NIDT.

It belongs to the class II fructose-bisphosphate aldolase family. Requires Zn(2+) as cofactor.

The catalysed reaction is beta-D-fructose 1,6-bisphosphate = D-glyceraldehyde 3-phosphate + dihydroxyacetone phosphate. Its pathway is carbohydrate degradation; glycolysis; D-glyceraldehyde 3-phosphate and glycerone phosphate from D-glucose: step 4/4. In terms of biological role, catalyzes the aldol condensation of dihydroxyacetone phosphate (DHAP or glycerone-phosphate) with glyceraldehyde 3-phosphate (G3P) to form fructose 1,6-bisphosphate (FBP) in gluconeogenesis and the reverse reaction in glycolysis. In Nostoc commune, this protein is Fructose-bisphosphate aldolase (fba).